We begin with the raw amino-acid sequence, 156 residues long: Small ribosomal subunit protein uS7 (156 aa).

It belongs to the universal ribosomal protein uS7 family. As to quaternary structure, part of the 30S ribosomal subunit. Contacts proteins S9 and S11.

One of the primary rRNA binding proteins, it binds directly to 16S rRNA where it nucleates assembly of the head domain of the 30S subunit. Is located at the subunit interface close to the decoding center, probably blocks exit of the E-site tRNA. This chain is Small ribosomal subunit protein uS7, found in Vibrio atlanticus (strain LGP32) (Vibrio splendidus (strain Mel32)).